A 178-amino-acid polypeptide reads, in one-letter code: SPbeta prophage-derived uncharacterized protein YonC (178 aa).

This Bacillus subtilis (strain 168) protein is SPbeta prophage-derived uncharacterized protein YonC (yonC).